The primary structure comprises 464 residues: Glutamate--tRNA ligase (464 aa).

The short motif at proline 11–glycine 21 is the 'HIGH' region element. The 'KMSKS' region signature appears at lysine 253–arginine 257. Lysine 256 serves as a coordination point for ATP.

This sequence belongs to the class-I aminoacyl-tRNA synthetase family. Glutamate--tRNA ligase type 1 subfamily. As to quaternary structure, monomer.

It is found in the cytoplasm. It catalyses the reaction tRNA(Glu) + L-glutamate + ATP = L-glutamyl-tRNA(Glu) + AMP + diphosphate. Its function is as follows. Catalyzes the attachment of glutamate to tRNA(Glu) in a two-step reaction: glutamate is first activated by ATP to form Glu-AMP and then transferred to the acceptor end of tRNA(Glu). The polypeptide is Glutamate--tRNA ligase (Metamycoplasma arthritidis (strain 158L3-1) (Mycoplasma arthritidis)).